The primary structure comprises 360 residues: 3-dehydroquinate synthase (360 aa).

Residues 71 to 76, 105 to 109, 129 to 130, Lys-142, Lys-151, and 169 to 172 each bind NAD(+); these read DGEQYK, GVVGD, TT, and TLNT. Residues Glu-184, His-248, and His-265 each contribute to the Zn(2+) site.

It belongs to the sugar phosphate cyclases superfamily. Dehydroquinate synthase family. It depends on Co(2+) as a cofactor. The cofactor is Zn(2+). NAD(+) is required as a cofactor.

The protein resides in the cytoplasm. The enzyme catalyses 7-phospho-2-dehydro-3-deoxy-D-arabino-heptonate = 3-dehydroquinate + phosphate. It participates in metabolic intermediate biosynthesis; chorismate biosynthesis; chorismate from D-erythrose 4-phosphate and phosphoenolpyruvate: step 2/7. Functionally, catalyzes the conversion of 3-deoxy-D-arabino-heptulosonate 7-phosphate (DAHP) to dehydroquinate (DHQ). In Coxiella burnetii (strain RSA 331 / Henzerling II), this protein is 3-dehydroquinate synthase.